Consider the following 363-residue polypeptide: NAD(P)H-quinone oxidoreductase subunit 1, chloroplastic (363 aa).

8 consecutive transmembrane segments (helical) span residues 26-46 (FVWI…GVLV), 96-116 (WLFA…FLVI), 127-147 (ISIG…GLLV), 175-195 (LALC…IEIV), 203-223 (ILGW…ISAL), 253-273 (FGLF…FVTI), 303-323 (GLIA…ASIL), and 343-363 (FLLP…LALL).

This sequence belongs to the complex I subunit 1 family. NDH is composed of at least 16 different subunits, 5 of which are encoded in the nucleus.

The protein resides in the plastid. The protein localises to the chloroplast thylakoid membrane. The enzyme catalyses a plastoquinone + NADH + (n+1) H(+)(in) = a plastoquinol + NAD(+) + n H(+)(out). The catalysed reaction is a plastoquinone + NADPH + (n+1) H(+)(in) = a plastoquinol + NADP(+) + n H(+)(out). Functionally, NDH shuttles electrons from NAD(P)H:plastoquinone, via FMN and iron-sulfur (Fe-S) centers, to quinones in the photosynthetic chain and possibly in a chloroplast respiratory chain. The immediate electron acceptor for the enzyme in this species is believed to be plastoquinone. Couples the redox reaction to proton translocation, and thus conserves the redox energy in a proton gradient. The chain is NAD(P)H-quinone oxidoreductase subunit 1, chloroplastic from Zygnema circumcarinatum (Green alga).